Consider the following 397-residue polypeptide: Ribosomal RNA large subunit methyltransferase I (397 aa).

One can recognise a PUA domain in the interval 2–79 (SASIYLVKGR…KEETVDLDFF (78 aa)).

It belongs to the methyltransferase superfamily. RlmI family.

The protein localises to the cytoplasm. It catalyses the reaction cytidine(1962) in 23S rRNA + S-adenosyl-L-methionine = 5-methylcytidine(1962) in 23S rRNA + S-adenosyl-L-homocysteine + H(+). Its function is as follows. Specifically methylates the cytosine at position 1962 (m5C1962) of 23S rRNA. This is Ribosomal RNA large subunit methyltransferase I from Aeromonas hydrophila subsp. hydrophila (strain ATCC 7966 / DSM 30187 / BCRC 13018 / CCUG 14551 / JCM 1027 / KCTC 2358 / NCIMB 9240 / NCTC 8049).